A 332-amino-acid chain; its full sequence is Holliday junction branch migration complex subunit RuvB (332 aa).

The interval 1–181 (MERIISELEM…FGVSHKMEYY (181 aa)) is large ATPase domain (RuvB-L). The ATP site is built by Leu20, Arg21, Gly62, Lys65, Thr66, Thr67, Arg171, Tyr181, and Arg218. Thr66 provides a ligand contact to Mg(2+). The segment at 182 to 252 (NENEIKSIII…SAKNALDMLG (71 aa)) is small ATPAse domain (RuvB-S). A head domain (RuvB-H) region spans residues 255–332 (SNGLDDLDRN…QHFKKVEVKI (78 aa)). DNA is bound by residues Arg291, Arg310, and Arg315.

Belongs to the RuvB family. Homohexamer. Forms an RuvA(8)-RuvB(12)-Holliday junction (HJ) complex. HJ DNA is sandwiched between 2 RuvA tetramers; dsDNA enters through RuvA and exits via RuvB. An RuvB hexamer assembles on each DNA strand where it exits the tetramer. Each RuvB hexamer is contacted by two RuvA subunits (via domain III) on 2 adjacent RuvB subunits; this complex drives branch migration. In the full resolvosome a probable DNA-RuvA(4)-RuvB(12)-RuvC(2) complex forms which resolves the HJ.

It is found in the cytoplasm. The catalysed reaction is ATP + H2O = ADP + phosphate + H(+). The RuvA-RuvB-RuvC complex processes Holliday junction (HJ) DNA during genetic recombination and DNA repair, while the RuvA-RuvB complex plays an important role in the rescue of blocked DNA replication forks via replication fork reversal (RFR). RuvA specifically binds to HJ cruciform DNA, conferring on it an open structure. The RuvB hexamer acts as an ATP-dependent pump, pulling dsDNA into and through the RuvAB complex. RuvB forms 2 homohexamers on either side of HJ DNA bound by 1 or 2 RuvA tetramers; 4 subunits per hexamer contact DNA at a time. Coordinated motions by a converter formed by DNA-disengaged RuvB subunits stimulates ATP hydrolysis and nucleotide exchange. Immobilization of the converter enables RuvB to convert the ATP-contained energy into a lever motion, pulling 2 nucleotides of DNA out of the RuvA tetramer per ATP hydrolyzed, thus driving DNA branch migration. The RuvB motors rotate together with the DNA substrate, which together with the progressing nucleotide cycle form the mechanistic basis for DNA recombination by continuous HJ branch migration. Branch migration allows RuvC to scan DNA until it finds its consensus sequence, where it cleaves and resolves cruciform DNA. The protein is Holliday junction branch migration complex subunit RuvB of Fusobacterium nucleatum subsp. nucleatum (strain ATCC 25586 / DSM 15643 / BCRC 10681 / CIP 101130 / JCM 8532 / KCTC 2640 / LMG 13131 / VPI 4355).